Reading from the N-terminus, the 122-residue chain is Succinate dehydrogenase assembly factor 2, mitochondrial (122 aa).

The protein belongs to the SDHAF2 family. As to quaternary structure, interacts with the flavoprotein subunit within the SDH catalytic dimer.

It is found in the mitochondrion matrix. Its function is as follows. Plays an essential role in the assembly of succinate dehydrogenase (SDH), an enzyme complex (also referred to as respiratory complex II) that is a component of both the tricarboxylic acid (TCA) cycle and the mitochondrial electron transport chain, and which couples the oxidation of succinate to fumarate with the reduction of ubiquinone (coenzyme Q) to ubiquinol. Required for flavinylation (covalent attachment of FAD) of the flavoprotein subunit of the SDH catalytic dimer. This Caenorhabditis briggsae protein is Succinate dehydrogenase assembly factor 2, mitochondrial.